The primary structure comprises 490 residues: MFPRASALAKCMATVHRRGLLTSGAQSLVSKPVSEGDPEMFDILQQERHRQKHSITLIPSENFTSKAVMDLLGSELQNKYSEGYPGERYYGGNEIIDKSESLCQARALELYGLDPAKWGVNVQPLSGAPANLYVYSAIMNVGERLMGLDLPDGGHLSHGYQLKSGTPISFISKYFQSMPYHVDHTTGLIDYDNLQVLAKAFRPKVIVAGTSAYSRLIDYARFKEISQGCGAYLMSDMAHISGLVAANVVPSPFEHSDIVTTTTHKSLRGPRGAMIFFRKGIKSVTKKGKEIPYELEKKINFSVFPGHQGGPHNHTIGAMAVALKQAMSPEFKEYQQKIVDNSKWFAQELTKMGYKLVSGGTDNHLIVIDLSGTQVDGARVETILSALNIAANKNTIPGDKSALFPSGLRIGTPAMTTRGFGREEFSQVAKYIDSAVKLAENLKTLEPTTKLDARSRLNEFKKLCNESSEVAALSGEISKWVGQYPVPGDI.

The N-terminal 20 residues, 1 to 20, are a transit peptide targeting the mitochondrion; sequence MFPRASALAKCMATVHRRGL. Lys-265 carries the post-translational modification N6-(pyridoxal phosphate)lysine.

The protein belongs to the SHMT family. As to quaternary structure, homotetramer. Interacts with NAP1. The cofactor is pyridoxal 5'-phosphate.

It is found in the mitochondrion. The catalysed reaction is (6R)-5,10-methylene-5,6,7,8-tetrahydrofolate + glycine + H2O = (6S)-5,6,7,8-tetrahydrofolate + L-serine. It functions in the pathway one-carbon metabolism; tetrahydrofolate interconversion. Interconversion of serine and glycine. This Saccharomyces cerevisiae (strain ATCC 204508 / S288c) (Baker's yeast) protein is Serine hydroxymethyltransferase, mitochondrial (SHM1).